The sequence spans 163 residues: Pheromone-binding protein (163 aa).

The first 21 residues, 1–21 (MLRKISLLLLPVFVAINLVHS), serve as a signal peptide directing secretion. 3 disulfides stabilise this stretch: C40-C75, C71-C129, and C118-C138.

The protein belongs to the PBP/GOBP family. In terms of assembly, homodimer. In terms of tissue distribution, antenna.

In terms of biological role, this major soluble protein in olfactory sensilla of male moths might serve to solubilize the extremely hydrophobic pheromone molecules and to transport pheromone through the aqueous lymph to receptors located on olfactory cilia. This is Pheromone-binding protein from Antheraea polyphemus (Polyphemus moth).